A 123-amino-acid chain; its full sequence is Transmembrane protein 254 (123 aa).

A run of 3 helical transmembrane segments spans residues 15-35 (LFWFTVITVSFGYYTWAVFWP), 63-83 (NGYWLAWLIHVGESLYALVLC), and 95-115 (LLWFLQTFLFGVASLSILIAY).

The protein localises to the membrane. The chain is Transmembrane protein 254 from Mus musculus (Mouse).